The chain runs to 127 residues: Aspartate 1-decarboxylase (127 aa).

Catalysis depends on Ser25, which acts as the Schiff-base intermediate with substrate; via pyruvic acid. A Pyruvic acid (Ser) modification is found at Ser25. Thr57 is a substrate binding site. Tyr58 functions as the Proton donor in the catalytic mechanism. 73 to 75 (GAA) provides a ligand contact to substrate.

Belongs to the PanD family. In terms of assembly, heterooctamer of four alpha and four beta subunits. Pyruvate is required as a cofactor. Is synthesized initially as an inactive proenzyme, which is activated by self-cleavage at a specific serine bond to produce a beta-subunit with a hydroxyl group at its C-terminus and an alpha-subunit with a pyruvoyl group at its N-terminus.

The protein resides in the cytoplasm. It carries out the reaction L-aspartate + H(+) = beta-alanine + CO2. Its pathway is cofactor biosynthesis; (R)-pantothenate biosynthesis; beta-alanine from L-aspartate: step 1/1. Functionally, catalyzes the pyruvoyl-dependent decarboxylation of aspartate to produce beta-alanine. This chain is Aspartate 1-decarboxylase, found in Staphylococcus aureus (strain JH1).